Reading from the N-terminus, the 217-residue chain is tRNA (guanine-N(7)-)-methyltransferase (217 aa).

S-adenosyl-L-methionine is bound by residues Glu44, Glu69, Asp96, and Asp118. Residue Asp118 is part of the active site. Lys122 is a substrate binding site. The interaction with RNA stretch occupies residues 124–129; sequence RHEKRR. Substrate contacts are provided by residues Asp154 and 191 to 194; that span reads TEYE.

It belongs to the class I-like SAM-binding methyltransferase superfamily. TrmB family.

It catalyses the reaction guanosine(46) in tRNA + S-adenosyl-L-methionine = N(7)-methylguanosine(46) in tRNA + S-adenosyl-L-homocysteine. It functions in the pathway tRNA modification; N(7)-methylguanine-tRNA biosynthesis. In terms of biological role, catalyzes the formation of N(7)-methylguanine at position 46 (m7G46) in tRNA. In Bacillus velezensis (strain DSM 23117 / BGSC 10A6 / LMG 26770 / FZB42) (Bacillus amyloliquefaciens subsp. plantarum), this protein is tRNA (guanine-N(7)-)-methyltransferase.